The chain runs to 324 residues: Probable UDP-sugar transporter protein SLC35A4 (324 aa).

The Cytoplasmic segment spans residues 1–18; the sequence is MSVEDGGVPGLGRPRKAR. Residues 19–39 traverse the membrane as a helical segment; it reads WTLMLLLSTAMYGAHAPLLAL. Over 40–52 the chain is Lumenal; the sequence is CHVDGRVPFRPSS. The chain crosses the membrane as a helical span at residues 53–73; sequence AVLLTELTKLLLCALSLLVGW. Residues 74–85 are Cytoplasmic-facing; that stretch reads QAWPQGTPPWRQ. A helical transmembrane segment spans residues 86 to 106; it reads AAPFALSALLYGANNNLVIYL. Residues 107–141 are Lumenal-facing; the sequence is QRYMDPSTYQVLSNLKIGSTALFYCLCLRHRLSAR. Residues 142-162 traverse the membrane as a helical segment; sequence QGLALLLLMAAGACYAAGGLQ. Over 163–180 the chain is Cytoplasmic; the sequence is DPGTTLPGPPSAAATSPM. The chain crosses the membrane as a helical span at residues 181–201; sequence PLHITPLGLLLLILYCLISGL. The Lumenal portion of the chain corresponds to 202–214; sequence SSVYTELLMKRQR. A helical transmembrane segment spans residues 215–235; it reads LPLALQNLFLYSFGVLLNLGL. The Cytoplasmic segment spans residues 236–248; it reads HAGGGPGPGLLEG. A helical membrane pass occupies residues 249 to 271; the sequence is FSGWMALVVLSQALNGLLMSAVM. At 272–275 the chain is on the lumenal side; it reads KHGS. A helical membrane pass occupies residues 276-298; sequence SITRLFVVSCSLVVNAVLSAALL. Topologically, residues 299 to 324 are cytoplasmic; sequence RLQLTAAFFLATLLIGLAVRLYYGSR.

Belongs to the nucleotide-sugar transporter family. SLC35A subfamily. In terms of assembly, found in a complex with SLC35A2 and SLC35A3.

Its subcellular location is the golgi apparatus membrane. It catalyses the reaction CDP-L-ribitol(in) + CDP(out) = CDP-L-ribitol(out) + CDP(in). Mediates the transport of CDP-ribitol. Does not exhibit CMP-sialic acid, UDP-galactose and UDP-N-acetylglucosamine transport activity. The sequence is that of Probable UDP-sugar transporter protein SLC35A4 from Bos taurus (Bovine).